A 367-amino-acid polypeptide reads, in one-letter code: Heme A synthase (367 aa).

The next 5 membrane-spanning stretches (helical) occupy residues A25–G45, L111–G131, W139–V159, L174–G194, and G210–A230. H274 provides a ligand contact to heme. The next 3 membrane-spanning stretches (helical) occupy residues I276 to A296, A305 to M325, and V327 to I347. H335 is a binding site for heme.

The protein belongs to the COX15/CtaA family. Type 2 subfamily. Interacts with CtaB. Heme b is required as a cofactor.

Its subcellular location is the cell membrane. It catalyses the reaction Fe(II)-heme o + 2 A + H2O = Fe(II)-heme a + 2 AH2. It participates in porphyrin-containing compound metabolism; heme A biosynthesis; heme A from heme O: step 1/1. Its function is as follows. Catalyzes the conversion of heme O to heme A by two successive hydroxylations of the methyl group at C8. The first hydroxylation forms heme I, the second hydroxylation results in an unstable dihydroxymethyl group, which spontaneously dehydrates, resulting in the formyl group of heme A. The polypeptide is Heme A synthase (Rhizobium leguminosarum bv. trifolii (strain WSM2304)).